A 167-amino-acid chain; its full sequence is MMLKQAAKKALGLTSRQSTPWSVGILRTYHENVIDHYDNPRNVGSFDKNDPNVGTGLVGAPACGDVMKLQIKVDEKTGQIVDARFKTFGCGSAIASSSVATEWVKGKAMEDVLTIKNTEIAKHLSLPPVKLHCSMLAEDAIKAAVKDYKEKRVKTNGAAAAGETTQA.

A mitochondrion-targeting transit peptide spans 1 to 50; that stretch reads MMLKQAAKKALGLTSRQSTPWSVGILRTYHENVIDHYDNPRNVGSFDKND.

This sequence belongs to the NifU family. As to quaternary structure, component of the core Fe-S cluster (ISC) assembly machinery. Interacts with HSCB. It depends on [2Fe-2S] cluster as a cofactor. As to expression, expressed in roots, stems, leaves, flowers, pollen and siliques.

It is found in the mitochondrion matrix. The protein localises to the cytoplasm. It localises to the cytosol. The protein operates within cofactor biosynthesis; iron-sulfur cluster biosynthesis. In terms of biological role, scaffold protein for the de novo synthesis of iron-sulfur (Fe-S) clusters within mitochondria, which is required for maturation of both mitochondrial and cytoplasmic [2Fe-2S] and [4Fe-4S] proteins. First, a [2Fe-2S] cluster is transiently assembled on the scaffold protein ISCU (ISU1, ISU2 or ISU3). In a second step, the cluster is released from ISCU, transferred to a glutaredoxin, followed by the formation of mitochondrial [2Fe-2S] proteins, the synthesis of [4Fe-4S] clusters and their target-specific insertion into the recipient apoproteins. Cluster assembly on ISCU depends on the function of the cysteine desulfurase complex NFS1-ISD11, which serves as the sulfur donor for cluster synthesis, the iron-binding protein frataxin as the putative iron donor, and the electron transfer chain comprised of ferredoxin reductase and ferredoxin, which receive their electrons from NADH. The sequence is that of Iron-sulfur cluster assembly protein 1 (ISU1) from Arabidopsis thaliana (Mouse-ear cress).